A 607-amino-acid polypeptide reads, in one-letter code: Polyphenol oxidase, chloroplastic (607 aa).

The N-terminal 103 residues, 1-103, are a transit peptide targeting the chloroplast; the sequence is MASLPWSLTT…LGATKPLAFG (103 aa). A disordered region spans residues 39 to 73; that stretch reads RNRSRRFAPSKVSCNSANGDPNSDSTSDVRETSSG. The span at 50–64 shows a compositional bias: polar residues; the sequence is VSCNSANGDPNSDST. 2 cysteine pairs are disulfide-bonded: Cys-114–Cys-129 and Cys-128–Cys-191. Residues His-190, His-211, His-220, His-342, His-346, and His-375 each contribute to the Cu cation site. A cross-link (2'-(S-cysteinyl)-histidine (Cys-His)) is located at residues 194-211; the sequence is CQGAYDQVGYTDLELQVH.

The protein belongs to the tyrosinase family. The cofactor is Cu(2+).

The protein localises to the plastid. The protein resides in the chloroplast thylakoid lumen. It catalyses the reaction 2 catechol + O2 = 2 1,2-benzoquinone + 2 H2O. Catalyzes the oxidation of mono- and o-diphenols to o-diquinones. The polypeptide is Polyphenol oxidase, chloroplastic (Vitis vinifera (Grape)).